Here is a 440-residue protein sequence, read N- to C-terminus: Adenylyltransferase and sulfurtransferase UBA4 (440 aa).

At Met-1 the chain carries N-acetylmethionine. ATP contacts are provided by residues Gly-77, Asp-98, 105 to 109 (SNLHR), Lys-122, and 166 to 167 (DS). Zn(2+)-binding residues include Cys-208 and Cys-211. The active-site Glycyl thioester intermediate; for adenylyltransferase activity is Cys-225. Zn(2+)-binding residues include Cys-286 and Cys-289. Ser-326 is subject to Phosphoserine. The 100-residue stretch at 339 to 438 (FLAKHIFLDV…YIDDIDQTIP (100 aa)) folds into the Rhodanese domain. Cys-397 serves as the catalytic Cysteine persulfide intermediate; for sulfurtransferase activity.

In the N-terminal section; belongs to the HesA/MoeB/ThiF family. UBA4 subfamily. It depends on Zn(2+) as a cofactor.

Its subcellular location is the cytoplasm. It localises to the cytosol. It participates in tRNA modification; 5-methoxycarbonylmethyl-2-thiouridine-tRNA biosynthesis. Its function is as follows. Plays a central role in 2-thiolation of mcm(5)S(2)U at tRNA wobble positions of cytosolic tRNA(Lys), tRNA(Glu) and tRNA(Gln). Acts by mediating the C-terminal thiocarboxylation of sulfur carrier URM1. Its N-terminus first activates URM1 as acyl-adenylate (-COAMP), then the persulfide sulfur on the catalytic cysteine is transferred to URM1 to form thiocarboxylation (-COSH) of its C-terminus. The reaction probably involves hydrogen sulfide that is generated from the persulfide intermediate and that acts as a nucleophile towards URM1. Subsequently, a transient disulfide bond is formed. Does not use thiosulfate as sulfur donor; NFS1 probably acting as a sulfur donor for thiocarboxylation reactions. Prior mcm(5) tRNA modification by the elongator complex is required for 2-thiolation. May also be involved in protein urmylation. This is Adenylyltransferase and sulfurtransferase UBA4 from Saccharomyces cerevisiae (strain RM11-1a) (Baker's yeast).